The chain runs to 248 residues: Ras-like protein family member 11B (248 aa).

Residues 29–246 (AGRRLVKIAV…ALSAKVRTVT (218 aa)) form a small GTPase-like region. Residues 40–47 (GASGVGKT), 87–91 (DTPGI), and 152–155 (NKAD) each bind GTP. Residues 205–229 (QQPSGTPEKRRTSLIPRPKSPNMQD) form a disordered region.

The protein belongs to the small GTPase superfamily. Ras family.

The catalysed reaction is GTP + H2O = GDP + phosphate + H(+). In Bos taurus (Bovine), this protein is Ras-like protein family member 11B.